The sequence spans 369 residues: Anhydro-N-acetylmuramic acid kinase (369 aa).

12 to 19 (GTSLDGVD) is a binding site for ATP.

It belongs to the anhydro-N-acetylmuramic acid kinase family.

The catalysed reaction is 1,6-anhydro-N-acetyl-beta-muramate + ATP + H2O = N-acetyl-D-muramate 6-phosphate + ADP + H(+). Its pathway is amino-sugar metabolism; 1,6-anhydro-N-acetylmuramate degradation. It functions in the pathway cell wall biogenesis; peptidoglycan recycling. Catalyzes the specific phosphorylation of 1,6-anhydro-N-acetylmuramic acid (anhMurNAc) with the simultaneous cleavage of the 1,6-anhydro ring, generating MurNAc-6-P. Is required for the utilization of anhMurNAc either imported from the medium or derived from its own cell wall murein, and thus plays a role in cell wall recycling. This Shigella boydii serotype 18 (strain CDC 3083-94 / BS512) protein is Anhydro-N-acetylmuramic acid kinase.